The chain runs to 49 residues: Light-harvesting protein B-880 alpha chain (49 aa).

The Cytoplasmic segment spans residues 1 to 12 (MYKLWLLFDPRR). Residues 13–33 (TLVALSAFLFVLGLIIHFISL) form a helical membrane-spanning segment. A bacteriochlorophyll is bound at residue histidine 29. Over 34–49 (STDRFNWLEGKPAVRA) the chain is Periplasmic.

The protein belongs to the antenna complex alpha subunit family. In terms of assembly, the core complex is formed by different alpha and beta chains, binding bacteriochlorophyll molecules, and arranged most probably in tetrameric structures disposed around the reaction center. The non-pigmented gamma chains may constitute additional components.

It is found in the cell inner membrane. Antenna complexes are light-harvesting systems, which transfer the excitation energy to the reaction centers. This is Light-harvesting protein B-880 alpha chain from Rhodoblastus acidophilus (Rhodopseudomonas acidophila).